The chain runs to 878 residues: Multiple RNA-binding domain-containing protein 1 (878 aa).

The 89-residue stretch at 2–90 (SRVIVKGLPI…SKIEVSMAKS (89 aa)) folds into the RRM 1 domain. 3 disordered regions span residues 118 to 143 (LLADKKDSQKKQKSDSNNDGGKKHDI), 159 to 269 (TMKP…AKDE), and 287 to 323 (GADTPVSKQQQQPDTEQQQPEETEVETSQESEEEKSL). Residues 159 to 177 (TMKPSSQVTSWETVQSSKT) are compositionally biased toward polar residues. A compositionally biased stretch (acidic residues) spans 180–190 (EDEEAADDEVG). Over residues 295 to 304 (QQQQPDTEQQ) the composition is skewed to low complexity. The segment covering 305 to 319 (QPEETEVETSQESEE) has biased composition (acidic residues). 4 RRM domains span residues 330–408 (GRLF…PADA), 516–588 (RVIL…KGPS), 651–734 (VSIF…LSHR), and 752–829 (GKII…FVEQ). The disordered stretch occupies residues 732-751 (SHRQGTSTTNASSKKKKKNQ). The segment at 852–878 (TKIANMRNSGKRKIDLDEDDENDGLQG) is disordered. Acidic residues predominate over residues 867 to 878 (LDEDDENDGLQG).

This sequence belongs to the RRM MRD1 family.

The protein localises to the nucleus. Functionally, involved in pre-rRNA processing. The chain is Multiple RNA-binding domain-containing protein 1 (MRD1) from Kluyveromyces lactis (strain ATCC 8585 / CBS 2359 / DSM 70799 / NBRC 1267 / NRRL Y-1140 / WM37) (Yeast).